Consider the following 667-residue polypeptide: Protein angel homolog 1 (667 aa).

Residues Ser-77 and Ser-105 each carry the phosphoserine modification.

It belongs to the CCR4/nocturin family.

This Mus musculus (Mouse) protein is Protein angel homolog 1.